The sequence spans 558 residues: Potassium-transporting ATPase potassium-binding subunit (558 aa).

The next 12 helical transmembrane spans lie at 1 to 21 (MEIILFLTMMVMIAYVFSGYL), 66 to 86 (FNGFMGLITFVLLIVQQWLFL), 127 to 147 (MIVMTYLMFTSSASGYAVCIA), 166 to 186 (IVRFIVRVLLPLSCLISILLM), 245 to 265 (IWSDFIEMGSMMLLPMSMLFL), 281 to 301 (ALILFVAMFFIFIAILTLTMW), 327 to 347 (FGAGLSALFTVITTAFTTGSV), 354 to 374 (LTPLGGLGPMVLMMLNVVFGG), 377 to 397 (VGLMNLLIYVLLTVFICSLMV), 416 to 436 (IVLVFLIHPILILVFSALAFM), 482 to 502 (ISTGIIMLLSRYIPIILQLLI), and 531 to 551 (IVFIVLLSGLTFIPVLLLGPI).

This sequence belongs to the KdpA family. The system is composed of three essential subunits: KdpA, KdpB and KdpC.

Its subcellular location is the cell membrane. Its function is as follows. Part of the high-affinity ATP-driven potassium transport (or Kdp) system, which catalyzes the hydrolysis of ATP coupled with the electrogenic transport of potassium into the cytoplasm. This subunit binds the extracellular potassium ions and delivers the ions to the membrane domain of KdpB through an intramembrane tunnel. The chain is Potassium-transporting ATPase potassium-binding subunit from Staphylococcus aureus (strain bovine RF122 / ET3-1).